We begin with the raw amino-acid sequence, 146 residues long: Large ribosomal subunit protein uL15 (146 aa).

The segment at 1–56 is disordered; it reads MRLHDLRPVPGSRQKPTRKGQGIGSGLGKTAGRGQKGQKARSGGGVRPGFEGGQMP. 2 stretches are compositionally biased toward gly residues: residues 21–35 and 42–52; these read QGIGSGLGKTAGRGQ and SGGGVRPGFEG.

It belongs to the universal ribosomal protein uL15 family. Part of the 50S ribosomal subunit.

Binds to the 23S rRNA. This chain is Large ribosomal subunit protein uL15, found in Carboxydothermus hydrogenoformans (strain ATCC BAA-161 / DSM 6008 / Z-2901).